Here is a 127-residue protein sequence, read N- to C-terminus: Large ribosomal subunit protein bL17 (127 aa).

This sequence belongs to the bacterial ribosomal protein bL17 family. As to quaternary structure, part of the 50S ribosomal subunit. Contacts protein L32.

This is Large ribosomal subunit protein bL17 from Photobacterium profundum (strain SS9).